A 347-amino-acid chain; its full sequence is D-alanine--D-alanine ligase (347 aa).

Residues 131 to 333 (KRVLESAGIA…YPELIERLVD (203 aa)) enclose the ATP-grasp domain. Residue 161 to 216 (EEKLAYPVFAKPSNMGSSVGISKSENQEELRQALKLAFRYDSRVLVEQGVNAREIE) participates in ATP binding. 3 residues coordinate Mg(2+): D287, E300, and N302.

The protein belongs to the D-alanine--D-alanine ligase family. Mg(2+) is required as a cofactor. Requires Mn(2+) as cofactor.

It localises to the cytoplasm. The enzyme catalyses 2 D-alanine + ATP = D-alanyl-D-alanine + ADP + phosphate + H(+). The protein operates within cell wall biogenesis; peptidoglycan biosynthesis. Its function is as follows. Cell wall formation. The sequence is that of D-alanine--D-alanine ligase from Streptococcus pneumoniae (strain P1031).